The following is a 228-amino-acid chain: Latherin (228 aa).

The signal sequence occupies residues 1-20; it reads MLKVSCLFVLLCGLLVPSSA. The cysteines at positions 153 and 196 are disulfide-linked.

This sequence belongs to the BPI/LBP/Plunc superfamily. Plunc family. Monomer. No sign of N-X-[ST] acceptor site even though reported as N-glycosylated. Found in sweat (at protein level).

It localises to the secreted. In terms of biological role, major protein in sweat, has surfactant properties. Has a role in temperature regulation by having a capacity to make hydrophobic surfaces wettable and so can function in promoting spreading and evaporation of sweat. The sequence is that of Latherin (LATH) from Equus caballus (Horse).